The sequence spans 323 residues: Beta-ketoacyl-[acyl-carrier-protein] synthase III (323 aa).

Catalysis depends on residues Cys-112 and His-250. Residues 251 to 255 (QANQR) are ACP-binding. Asn-280 is an active-site residue.

The protein belongs to the thiolase-like superfamily. FabH family. Homodimer.

Its subcellular location is the cytoplasm. It catalyses the reaction malonyl-[ACP] + acetyl-CoA + H(+) = 3-oxobutanoyl-[ACP] + CO2 + CoA. It functions in the pathway lipid metabolism; fatty acid biosynthesis. Functionally, catalyzes the condensation reaction of fatty acid synthesis by the addition to an acyl acceptor of two carbons from malonyl-ACP. Catalyzes the first condensation reaction which initiates fatty acid synthesis and may therefore play a role in governing the total rate of fatty acid production. Possesses both acetoacetyl-ACP synthase and acetyl transacylase activities. Its substrate specificity determines the biosynthesis of branched-chain and/or straight-chain of fatty acids. The protein is Beta-ketoacyl-[acyl-carrier-protein] synthase III of Oenococcus oeni (strain ATCC BAA-331 / PSU-1).